The chain runs to 461 residues: Fumarate hydratase class II (461 aa).

Substrate-binding positions include Ser-97–Thr-99, His-127–Asp-130, Ser-137–Asn-139, and Thr-185. His-186 functions as the Proton donor/acceptor in the catalytic mechanism. Ser-316 is a catalytic residue. Substrate is bound by residues Ser-317 and Lys-322–Asn-324.

The protein belongs to the class-II fumarase/aspartase family. Fumarase subfamily. In terms of assembly, homotetramer.

The protein resides in the cytoplasm. It carries out the reaction (S)-malate = fumarate + H2O. Its pathway is carbohydrate metabolism; tricarboxylic acid cycle; (S)-malate from fumarate: step 1/1. Involved in the TCA cycle. Catalyzes the stereospecific interconversion of fumarate to L-malate. In Staphylococcus epidermidis (strain ATCC 35984 / DSM 28319 / BCRC 17069 / CCUG 31568 / BM 3577 / RP62A), this protein is Fumarate hydratase class II.